A 611-amino-acid polypeptide reads, in one-letter code: Chaperone protein DnaK (611 aa).

A Phosphothreonine; by autocatalysis modification is found at Thr173. Positions 577 to 592 (QAAAGQAEGAQGAQDA) are enriched in low complexity. Residues 577–611 (QAAAGQAEGAQGAQDAGTKKDNVVDAEFEEVKEDK) form a disordered region. Positions 600-611 (VDAEFEEVKEDK) are enriched in acidic residues.

This sequence belongs to the heat shock protein 70 family.

Acts as a chaperone. The polypeptide is Chaperone protein DnaK (Bacillus cereus (strain G9842)).